Here is a 1226-residue protein sequence, read N- to C-terminus: AF4/FMR2 family member 3 (1226 aa).

Residues 24-37 (RNALRRKERERRNQ) are compositionally biased toward basic and acidic residues. Disordered stretches follow at residues 24-65 (RNAL…GDEL), 116-164 (SRAQ…RATQ), 197-299 (ERPP…GETN), 323-496 (KVEP…SNQY), and 523-728 (IKST…SINA). A compositionally biased stretch (polar residues) spans 42–52 (DDGTFNSSYSL). The span at 123–132 (SSICSTTTST) shows a compositional bias: low complexity. Composition is skewed to polar residues over residues 251–261 (LKSSSETSVHC) and 334–344 (KDSQLVSSGHN). A compositionally biased stretch (low complexity) spans 381 to 392 (QQAAQRTALRAL). Positions 396–408 (AVVQQPNCRTSVP) are enriched in polar residues. The span at 409-445 (SSKGSSSSSSSGSSSSSSDSESSSGSDSETESSSSES) shows a compositional bias: low complexity. Residues 485–496 (QNESHGSESNQY) are compositionally biased toward polar residues. The segment covering 523–533 (IKSTCKEEQRP) has biased composition (basic and acidic residues). Low complexity-rich tracts occupy residues 550-561 (PPAAVAVAVSAA) and 569-579 (CAPAENAPAPA). Over residues 589–607 (RRTERTSAGDGANCHRPEE) the composition is skewed to basic and acidic residues. Over residues 668-678 (TESSSSSSSSD) the composition is skewed to low complexity. The segment covering 692-705 (KAQTVAASASSGND) has biased composition (polar residues). Ser755 is modified (phosphoserine). 3 disordered regions span residues 783-856 (PQEP…LSAN), 879-964 (PISP…RDCK), and 1100-1138 (AAQA…SLSN). Residues 830-842 (REIKKSQGEKDSS) show a composition bias toward basic and acidic residues. A compositionally biased stretch (polar residues) spans 843-856 (SRLATSTSNTLSAN). Ser881 bears the Phosphoserine mark. The segment covering 894–909 (EDLTSSSRPNGNSLFT) has biased composition (polar residues).

This sequence belongs to the AF4 family. Preferentially expressed in lymphoid tissues, highest levels being found in the thymus.

The protein resides in the nucleus. Putative transcription activator that may function in lymphoid development and oncogenesis. Binds, in vitro, to double-stranded DNA. This is AF4/FMR2 family member 3 from Homo sapiens (Human).